The chain runs to 352 residues: Isopentenyl-diphosphate delta-isomerase (352 aa).

Residue 6-7 (RK) coordinates substrate. Residues 63-65 (AMT), S93, and N122 each bind FMN. 93 to 95 (SQR) lines the substrate pocket. Residue Q160 coordinates substrate. E161 lines the Mg(2+) pocket. FMN contacts are provided by residues K192, T221, 271–273 (GIR), and 292–293 (SQ).

Belongs to the IPP isomerase type 2 family. In terms of assembly, homooctamer. Dimer of tetramers. Requires FMN as cofactor. The cofactor is NADPH. Mg(2+) is required as a cofactor.

It localises to the cytoplasm. It catalyses the reaction isopentenyl diphosphate = dimethylallyl diphosphate. Its function is as follows. Involved in the biosynthesis of isoprenoids. Catalyzes the 1,3-allylic rearrangement of the homoallylic substrate isopentenyl (IPP) to its allylic isomer, dimethylallyl diphosphate (DMAPP). In Pyrobaculum arsenaticum (strain DSM 13514 / JCM 11321 / PZ6), this protein is Isopentenyl-diphosphate delta-isomerase.